A 313-amino-acid polypeptide reads, in one-letter code: Probable 5-dehydro-4-deoxyglucarate dehydratase 1 (313 aa).

This sequence belongs to the DapA family.

It catalyses the reaction 5-dehydro-4-deoxy-D-glucarate + H(+) = 2,5-dioxopentanoate + CO2 + H2O. It functions in the pathway carbohydrate acid metabolism; D-glucarate degradation; 2,5-dioxopentanoate from D-glucarate: step 2/2. This is Probable 5-dehydro-4-deoxyglucarate dehydratase 1 from Streptomyces avermitilis (strain ATCC 31267 / DSM 46492 / JCM 5070 / NBRC 14893 / NCIMB 12804 / NRRL 8165 / MA-4680).